We begin with the raw amino-acid sequence, 190 residues long: Xanthine phosphoribosyltransferase (190 aa).

Xanthine is bound by residues leucine 20 and asparagine 27. 128 to 132 (ANGKA) lines the 5-phospho-alpha-D-ribose 1-diphosphate pocket. Lysine 156 contacts xanthine.

The protein belongs to the purine/pyrimidine phosphoribosyltransferase family. Xpt subfamily. As to quaternary structure, homodimer.

The protein resides in the cytoplasm. It catalyses the reaction XMP + diphosphate = xanthine + 5-phospho-alpha-D-ribose 1-diphosphate. Its pathway is purine metabolism; XMP biosynthesis via salvage pathway; XMP from xanthine: step 1/1. In terms of biological role, converts the preformed base xanthine, a product of nucleic acid breakdown, to xanthosine 5'-monophosphate (XMP), so it can be reused for RNA or DNA synthesis. This Pseudomonas fluorescens (strain SBW25) protein is Xanthine phosphoribosyltransferase.